A 282-amino-acid polypeptide reads, in one-letter code: Parvulin-like PPIase (282 aa).

The first 20 residues, 1–20, serve as a signal peptide directing secretion; the sequence is MKKLSVIFLSVSMLSGIAFA. One can recognise a PpiC domain in the interval 138 to 231; that stretch reads KEQIKVAHIL…FGWHIIKVLE (94 aa).

Belongs to the PpiC/parvulin rotamase family.

The protein localises to the cell outer membrane. The enzyme catalyses [protein]-peptidylproline (omega=180) = [protein]-peptidylproline (omega=0). This Rickettsia felis (strain ATCC VR-1525 / URRWXCal2) (Rickettsia azadi) protein is Parvulin-like PPIase (plp).